Reading from the N-terminus, the 94-residue chain is MASNLFTIFQLAGFVAIVFIVNLHSVSAESKEASASQGPGKSFKVEFCETNCTENNGVWSGCTGDCICVSVGDSKEGRCMDLGDKVIDTPVAQG.

Residues 1 to 28 form the signal peptide; the sequence is MASNLFTIFQLAGFVAIVFIVNLHSVSA. 3 disulfide bridges follow: Cys-48-Cys-66, Cys-52-Cys-68, and Cys-62-Cys-79. The N-linked (GlcNAc...) asparagine glycan is linked to Asn-51.

The protein localises to the secreted. Salivary chemokine-binding protein which binds to host chemokines CXCL1, CXCL2, CXCL3, CXCL5, CXCL6, CXCL12 and CXCL13. The chain is Evasin P1104 from Ixodes ricinus (Common tick).